A 141-amino-acid polypeptide reads, in one-letter code: Large ribosomal subunit protein uL14 (141 aa).

This sequence belongs to the universal ribosomal protein uL14 family. As to quaternary structure, part of the 50S ribosomal subunit. Forms a cluster with proteins L3 and L24e, part of which may contact the 16S rRNA in 2 intersubunit bridges.

Its function is as follows. Binds to 23S rRNA. Forms part of two intersubunit bridges in the 70S ribosome. The protein is Large ribosomal subunit protein uL14 of Thermofilum pendens (strain DSM 2475 / Hrk 5).